A 297-amino-acid chain; its full sequence is 3-mercaptopyruvate sulfurtransferase (297 aa).

Alanine 2 carries the N-acetylalanine modification. The Rhodanese 1 domain occupies 25–144 (ASQPLKLLDA…WLSQNLPISS (120 aa)). Position 35 is a phosphoserine (serine 35). Residue lysine 40 is modified to N6-acetyllysine; alternate. Lysine 40 is modified (N6-succinyllysine; alternate). A hinge region spans residues 145–160 (GKSPSEPAEFCAQLDP). An N6-succinyllysine mark is found at lysine 146 and lysine 164. Residues 174 to 288 (DARRFQVVDA…WYMRAQPEHV (115 aa)) enclose the Rhodanese 2 domain. Residue arginine 188 participates in substrate binding. Cysteine 248 acts as the Cysteine persulfide intermediate in catalysis.

Monomer (active form). Homodimer; disulfide-linked (inactive form). Post-translationally, the N-terminus is blocked. In terms of tissue distribution, expressed in liver, heart, kidney and brain. Localizes to tubular epithelium in the kidney, pericentral hepatocytes in the liver, cardiac cells in the heart and neuroglial cells in the brain. Also expressed in vascular endothelium of the thoracic aorta. Weak expression in lung and thymus.

The protein resides in the cytoplasm. It localises to the mitochondrion. It is found in the synapse. The protein localises to the synaptosome. It carries out the reaction 2-oxo-3-sulfanylpropanoate + [thioredoxin]-dithiol = [thioredoxin]-disulfide + hydrogen sulfide + pyruvate + H(+). With respect to regulation, by oxidative stress, and thioredoxin. Under oxidative stress conditions, the catalytic cysteine site is converted to a sulfenate which inhibits the MPST enzyme activity. Reduced thioredoxin cleaves an intersubunit disulfide bond to turn on the redox switch and reactivate the enzyme. Inhibited by different oxidants, hydrogen peroxide and tetrathionate. Functionally, transfer of a sulfur ion to cyanide or to other thiol compounds. Also has weak rhodanese activity. Detoxifies cyanide and is required for thiosulfate biosynthesis. Acts as an antioxidant. In combination with cysteine aminotransferase (CAT), contributes to the catabolism of cysteine and is an important producer of hydrogen sulfide in the brain, retina and vascular endothelial cells. Hydrogen sulfide H(2)S is an important synaptic modulator, signaling molecule, smooth muscle contractor and neuroprotectant. Its production by the 3MST/CAT pathway is regulated by calcium ions. This is 3-mercaptopyruvate sulfurtransferase (Mpst) from Rattus norvegicus (Rat).